Reading from the N-terminus, the 532-residue chain is 2,3-bisphosphoglycerate-independent phosphoglycerate mutase (532 aa).

Aspartate 15 and serine 65 together coordinate Mn(2+). The active-site Phosphoserine intermediate is serine 65. Substrate is bound by residues histidine 126, 156-157, arginine 188, arginine 194, 258-261, and lysine 331; these read RD and RPDR. Mn(2+) contacts are provided by aspartate 398, histidine 402, aspartate 439, histidine 440, and histidine 457.

The protein belongs to the BPG-independent phosphoglycerate mutase family. As to quaternary structure, monomer. The cofactor is Mn(2+).

The enzyme catalyses (2R)-2-phosphoglycerate = (2R)-3-phosphoglycerate. It participates in carbohydrate degradation; glycolysis; pyruvate from D-glyceraldehyde 3-phosphate: step 3/5. Catalyzes the interconversion of 2-phosphoglycerate and 3-phosphoglycerate. This Trichodesmium erythraeum (strain IMS101) protein is 2,3-bisphosphoglycerate-independent phosphoglycerate mutase.